We begin with the raw amino-acid sequence, 385 residues long: Putative cell agglutination protein pfl8 (385 aa).

Positions 1–20 are cleaved as a signal peptide; that stretch reads MNSYISLIFTLLFFTSAARS. The disordered stretch occupies residues 41-90; the sequence is SSEFTSTITPETPSSSSSTFVPISTHTSSATNTTSGQLSISSSSSTSSEY. Asn-72, Asn-270, and Asn-346 each carry an N-linked (GlcNAc...) asparagine glycan. The region spanning 196–360 is the PA14 domain; it reads EVSTFNKPAY…GPVRTTSYSY (165 aa).

Its subcellular location is the secreted. The protein resides in the cell surface. In terms of biological role, may be involved in agglutination during conjugation or other aspects of colony formation. Induces flocculation when overexpressed. The chain is Putative cell agglutination protein pfl8 from Schizosaccharomyces pombe (strain 972 / ATCC 24843) (Fission yeast).